Consider the following 457-residue polypeptide: MRKVSTGFVYFFGALGGLLFGYDTGVISGAILFIQKQMNLGSWQQGWVVSAVLLGAILGAAIIGPSSDRFGRRKLLLLSAIIFFVGALGSAFSPEFWTLIISRIILGMAVGAASALIPTYLAELAPSDKRGTVSSLFQLMVMTGILLAYITNYSFSGFYTGWRWMLGFAAIPAALLFLGGLILPESPRFLVKSGHLDEARHVLDTMNKHDQVAVNKEINDIQESAKIVSGGWSELFGKMVRPSLIIGIGLAIFQQVMGCNTVLYYAPTIFTDVGFGVSAALLAHIGIGIFNVIVTAIAVAIMDKIDRKKIVNIGAVGMGISLFVMSIGMKFSGGSQTAAIISVIALTVYIAFFSATWGPVMWVMIGEVFPLNIRGLGNSFASVINWTANMIVSLTFPSLLDFFGTGSLFIGYGILCFASIWFVQKKVFETRNRSLEDIEATLRAKTGEDAAELSTTK.

The next 10 membrane-spanning stretches (helical) occupy residues Ala14–Ile34, Gly46–Ser66, Ile81–Ile101, Ile104–Leu124, Gly131–Thr151, Trp164–Pro184, Leu244–Tyr264, Leu281–Ile301, Lys309–Met329, and Ala338–Gly358. Position 138 (Gln138) interacts with beta-D-xylose. Beta-D-xylose contacts are provided by residues Gln254 to Gln255 and Asn260. 2 residues coordinate beta-D-xylose: Trp362 and Asn385. The next 2 helical transmembrane spans lie at Phe380–Leu400 and Phe402–Phe422.

The protein belongs to the major facilitator superfamily. Sugar transporter (TC 2.A.1.1) family.

Its subcellular location is the cell membrane. Its activity is regulated as follows. Transport is inhibited by 6-deoxy-D-glucose. Uptake of D-xylose across the boundary membrane with the concomitant transport of protons into the cell (symport system). Transport is driven by the proton motive force generated by either malolactic fermentation or by the metabolism of D-glucose. This is D-xylose transporter from Levilactobacillus brevis (Lactobacillus brevis).